The primary structure comprises 255 residues: MAAEIRTFSCLNDNFGYLIHDVETKATASIDAPEAGPILKALEREGWQLTDILITHHHGDHVGGVAELKHKYNCRVVAPHDKTTAIANVDLRVANADVVKVGNLLARVVETPGHTLDHISYVFDTEKTVFAADTLFSIGCGRVFEGTYPMMWDSLLKLRALPDDFKLYCGHEYTASNVKFALTVDPDNAALQARAAEVAKLRAENKPTIPSLLGDEKRANVFLRADDPSVAARLHMKGADAAAVFGELRERKNKS.

The Zn(2+) site is built by His56, His58, Asp60, His61, His114, Asp133, and His171.

The protein belongs to the metallo-beta-lactamase superfamily. Glyoxalase II family. In terms of assembly, monomer. Zn(2+) serves as cofactor.

It catalyses the reaction an S-(2-hydroxyacyl)glutathione + H2O = a 2-hydroxy carboxylate + glutathione + H(+). It functions in the pathway secondary metabolite metabolism; methylglyoxal degradation; (R)-lactate from methylglyoxal: step 2/2. Functionally, thiolesterase that catalyzes the hydrolysis of S-D-lactoyl-glutathione to form glutathione and D-lactic acid. The polypeptide is Hydroxyacylglutathione hydrolase (Bradyrhizobium diazoefficiens (strain JCM 10833 / BCRC 13528 / IAM 13628 / NBRC 14792 / USDA 110)).